Here is a 475-residue protein sequence, read N- to C-terminus: Lactate utilization protein B (475 aa).

4Fe-4S ferredoxin-type domains lie at 304–334 (GTEFQAALHCIRCAACINVCPVYRHVGGHSY) and 353–382 (YEDHKELPYASSLCAACTDACPVKIPLHEL). [4Fe-4S] cluster is bound by residues C313, C316, C319, C323, C366, C369, and C373.

The protein belongs to the LutB/YkgF family.

Functionally, is involved in L-lactate degradation and allows cells to grow with lactate as the sole carbon source. Has probably a role as an electron transporter during oxidation of L-lactate. The protein is Lactate utilization protein B of Shouchella clausii (strain KSM-K16) (Alkalihalobacillus clausii).